The chain runs to 508 residues: Probable cytosol aminopeptidase (508 aa).

2 residues coordinate Mn(2+): K276 and D281. The active site involves K288. Mn(2+) is bound by residues D299, D358, and E360. Residue R362 is part of the active site.

It belongs to the peptidase M17 family. Mn(2+) serves as cofactor.

It is found in the cytoplasm. The catalysed reaction is Release of an N-terminal amino acid, Xaa-|-Yaa-, in which Xaa is preferably Leu, but may be other amino acids including Pro although not Arg or Lys, and Yaa may be Pro. Amino acid amides and methyl esters are also readily hydrolyzed, but rates on arylamides are exceedingly low.. It catalyses the reaction Release of an N-terminal amino acid, preferentially leucine, but not glutamic or aspartic acids.. In terms of biological role, presumably involved in the processing and regular turnover of intracellular proteins. Catalyzes the removal of unsubstituted N-terminal amino acids from various peptides. The protein is Probable cytosol aminopeptidase of Chlorobium luteolum (strain DSM 273 / BCRC 81028 / 2530) (Pelodictyon luteolum).